A 292-amino-acid chain; its full sequence is Formamidopyrimidine-DNA glycosylase (292 aa).

Pro2 acts as the Schiff-base intermediate with DNA in catalysis. Catalysis depends on Glu3, which acts as the Proton donor. The Proton donor; for beta-elimination activity role is filled by Lys61. Residues His103, Arg122, and Lys168 each coordinate DNA. The segment at 254-288 (DAYGREGEHCRRCGAVMRREKFMNRSSFYCPRCQP) adopts an FPG-type zinc-finger fold. Arg278 acts as the Proton donor; for delta-elimination activity in catalysis.

Belongs to the FPG family. As to quaternary structure, monomer. It depends on Zn(2+) as a cofactor.

The enzyme catalyses Hydrolysis of DNA containing ring-opened 7-methylguanine residues, releasing 2,6-diamino-4-hydroxy-5-(N-methyl)formamidopyrimidine.. The catalysed reaction is 2'-deoxyribonucleotide-(2'-deoxyribose 5'-phosphate)-2'-deoxyribonucleotide-DNA = a 3'-end 2'-deoxyribonucleotide-(2,3-dehydro-2,3-deoxyribose 5'-phosphate)-DNA + a 5'-end 5'-phospho-2'-deoxyribonucleoside-DNA + H(+). Involved in base excision repair of DNA damaged by oxidation or by mutagenic agents. Acts as a DNA glycosylase that recognizes and removes damaged bases. Has a preference for oxidized purines, such as 7,8-dihydro-8-oxoguanine (8-oxoG). Has AP (apurinic/apyrimidinic) lyase activity and introduces nicks in the DNA strand. Cleaves the DNA backbone by beta-delta elimination to generate a single-strand break at the site of the removed base with both 3'- and 5'-phosphates. The chain is Formamidopyrimidine-DNA glycosylase from Mycobacterium ulcerans (strain Agy99).